Consider the following 301-residue polypeptide: Heterogeneous nuclear ribonucleoprotein D-like (301 aa).

RRM domains are found at residues glycine 29–glutamate 111 and lysine 114–glutamate 193. At lysine 42 the chain carries N6-methyllysine. A Glycyl lysine isopeptide (Lys-Gly) (interchain with G-Cter in SUMO2) cross-link involves residue lysine 90. Lysine 97 is subject to N6-acetyllysine. At serine 122 the chain carries Phosphoserine. Disordered regions lie at residues valine 194 to glutamine 229 and glycine 279 to tyrosine 301. The segment covering glycine 204–glutamine 223 has biased composition (gly residues). The necessary for interaction with TNPO1 stretch occupies residues glutamine 223–tyrosine 301. Position 289 is a dimethylated arginine; alternate (arginine 289). Arginine 289 bears the Omega-N-methylarginine; alternate mark.

In terms of assembly, interacts with TNPO1. Interacts with ZNF148. Post-translationally, dimethylation of Arg-289 is probably of the asymmetric type. Expressed in skeletal muscle, myoblast, myotube, heart, brain, liver, kidney, heart, lung, stomach, small intestine, large intestine, spleen, and testis (at protein level). Expressed in brain, skeletal muscle, heart, lung, liver, stomach, small intestine, large intestine, kidney, spleen and testis.

It localises to the nucleus. The protein resides in the cytoplasm. In terms of biological role, acts as a transcriptional regulator. Promotes transcription repression. Promotes transcription activation in differentiated myotubes. Binds to double- and single-stranded DNA sequences. Binds to the transcription suppressor CATR sequence of the COX5B promoter. Binds with high affinity to RNA molecules that contain AU-rich elements (AREs) found within the 3'-UTR of many proto-oncogenes and cytokine mRNAs. Binds both to nuclear and cytoplasmic poly(A) mRNAs. Binds to poly(G) and poly(A), but not to poly(U) or poly(C) RNA homopolymers. Binds to the 5'-ACUAGC-3' RNA consensus sequence. In Mus musculus (Mouse), this protein is Heterogeneous nuclear ribonucleoprotein D-like (Hnrnpdl).